Here is a 155-residue protein sequence, read N- to C-terminus: Small ribosomal subunit protein uS7 (155 aa).

This sequence belongs to the universal ribosomal protein uS7 family. In terms of assembly, part of the 30S ribosomal subunit. Contacts proteins S9 and S11.

Its function is as follows. One of the primary rRNA binding proteins, it binds directly to 16S rRNA where it nucleates assembly of the head domain of the 30S subunit. Is located at the subunit interface close to the decoding center, probably blocks exit of the E-site tRNA. This Desulforapulum autotrophicum (strain ATCC 43914 / DSM 3382 / VKM B-1955 / HRM2) (Desulfobacterium autotrophicum) protein is Small ribosomal subunit protein uS7.